Reading from the N-terminus, the 708-residue chain is Polyribonucleotide nucleotidyltransferase (708 aa).

Positions 486 and 492 each coordinate Mg(2+). The 60-residue stretch at 553 to 612 folds into the KH domain; that stretch reads PRIIKFKINPEKIRDVIGKGGAVIRALTEETGTTIDISDDGSVTIACVSSEGGEQARKRI. The S1 motif domain maps to 622–690; it reads GRIYEGTVLK…EKGRLRLSMK (69 aa).

This sequence belongs to the polyribonucleotide nucleotidyltransferase family. Mg(2+) serves as cofactor.

It localises to the cytoplasm. The catalysed reaction is RNA(n+1) + phosphate = RNA(n) + a ribonucleoside 5'-diphosphate. Functionally, involved in mRNA degradation. Catalyzes the phosphorolysis of single-stranded polyribonucleotides processively in the 3'- to 5'-direction. In Nitrosomonas europaea (strain ATCC 19718 / CIP 103999 / KCTC 2705 / NBRC 14298), this protein is Polyribonucleotide nucleotidyltransferase.